The chain runs to 817 residues: U3 small nucleolar RNA-associated protein 13 (817 aa).

WD repeat units lie at residues 59-100, 102-139, 142-187, 191-233, 238-280, 386-425, 432-476, 489-528, 531-572, 573-614, 616-654, and 664-705; these read EDEQ…RSMK, SSPSYILDADSTSTLLAVGGTDGSIIVVDIENGYITHS, GHGG…HTLQ, SAVR…KCKL, PVNQ…VLKR, GHEDLLNSLDATEDGLWIATASKDNTAIVWRYNENSCKFD, GHSA…ASMD, AHEKDINALSVSPNDSIFATASYDKTCKIWNLENGELEAT, NHKR…KTLE, GHTN…KTLD, HNNRLWALSTMNDGDMIVSADADGVFQFWKDCTEQEIEE, and EQEQ…LGES.

Interacts with snoRNA U3. Interacts with MPP10. Component of the ribosomal small subunit (SSU) processome composed of at least 40 protein subunits and snoRNA U3.

It localises to the nucleus. It is found in the nucleolus. Involved in nucleolar processing of pre-18S ribosomal RNA. The protein is U3 small nucleolar RNA-associated protein 13 (UTP13) of Saccharomyces cerevisiae (strain ATCC 204508 / S288c) (Baker's yeast).